A 574-amino-acid polypeptide reads, in one-letter code: Actin-binding protein wsp1 (574 aa).

Residues 19–130 (IPKSTNKIIA…KKVLDKGCHP (112 aa)) form the WH1 domain. Disordered regions lie at residues 144 to 186 (KGSS…ELLN), 221 to 494 (AGTP…IAEL), and 517 to 574 (KSRK…DEWD). Positions 149 to 158 (HAPNNSNIQP) are enriched in polar residues. 2 stretches are compositionally biased toward pro residues: residues 230-240 (PPIPPSIPSSR) and 251-260 (PAPPPIPPPS). Composition is skewed to low complexity over residues 297-306 (SRVSAAALAA) and 324-335 (KPPIGNGSSNSS). Over residues 352 to 368 (PLPPQGRSAPPPPPPRS) the composition is skewed to pro residues. Position 386 is a phosphoserine (Ser386). Residues 415-485 (PPVPTPPSLP…PPPAPAPAPA (71 aa)) are compositionally biased toward pro residues. The region spanning 499-518 (GRANLMASIRASGGMDLLKS) is the WH2 domain. Polar residues predominate over residues 521 to 545 (VSASPSVASTKTSNPPVEAPPSNNL). Positions 563 to 574 (SDEEDEDDDEWD) are enriched in acidic residues.

As to quaternary structure, interacts with vrp1.

The protein resides in the cytoplasm. Its subcellular location is the cytoskeleton. Has a role in regulating actin assembly, so regulating polarized growth. This is Actin-binding protein wsp1 (wsp1) from Schizosaccharomyces pombe (strain 972 / ATCC 24843) (Fission yeast).